Consider the following 440-residue polypeptide: Serine/threonine-protein kinase STK11 (440 aa).

A Protein kinase domain is found at 49 to 309; sequence YLMGDLLGEG…IQQIRQHNWF (261 aa). ATP is bound by residues 55-63 and Lys-78; that span reads LGEGSYGKV. Asp-176 serves as the catalytic Proton acceptor. Thr-336 and Thr-365 each carry phosphothreonine; by autocatalysis. A disordered region spans residues 370–440; sequence VPGQVPEEEA…IRKLSTCKQQ (71 aa). Residues 430–440 show a composition bias toward basic residues; that stretch reads KIRKLSTCKQQ. Residue Ser-435 is modified to Phosphoserine; by PKA.

It belongs to the protein kinase superfamily. CAMK Ser/Thr protein kinase family. LKB1 subfamily. As to quaternary structure, catalytic component of a trimeric complex composed of STK11/LKB1, STRAD (STRADA or STRADB) and CAB39/MO25 (CAB39/MO25alpha or CAB39L/MO25beta). The cofactor is Mg(2+). Requires Mn(2+) as cofactor. In terms of tissue distribution, ubiquitously expressed in all tissues tested. High levels were observed in duodenum and skeletal muscle, lower levels in liver and pancreas.

It localises to the nucleus. The protein localises to the cytoplasm. The enzyme catalyses L-seryl-[protein] + ATP = O-phospho-L-seryl-[protein] + ADP + H(+). It carries out the reaction L-threonyl-[protein] + ATP = O-phospho-L-threonyl-[protein] + ADP + H(+). Functionally, tumor suppressor serine/threonine-protein kinase that controls the activity of AMP-activated protein kinase (AMPK) family members, thereby playing a role in various processes such as cell metabolism, cell polarity, apoptosis and DNA damage response. Acts by phosphorylating the T-loop of AMPK family proteins, leading to promote their activity. The polypeptide is Serine/threonine-protein kinase STK11 (Gallus gallus (Chicken)).